Consider the following 354-residue polypeptide: Uroporphyrinogen decarboxylase (354 aa).

Substrate is bound by residues 27–31 (RQAGR), aspartate 77, tyrosine 154, threonine 209, and histidine 327.

It belongs to the uroporphyrinogen decarboxylase family. As to quaternary structure, homodimer.

It is found in the cytoplasm. It carries out the reaction uroporphyrinogen III + 4 H(+) = coproporphyrinogen III + 4 CO2. It participates in porphyrin-containing compound metabolism; protoporphyrin-IX biosynthesis; coproporphyrinogen-III from 5-aminolevulinate: step 4/4. Functionally, catalyzes the decarboxylation of four acetate groups of uroporphyrinogen-III to yield coproporphyrinogen-III. This is Uroporphyrinogen decarboxylase from Pseudomonas putida (strain ATCC 700007 / DSM 6899 / JCM 31910 / BCRC 17059 / LMG 24140 / F1).